Reading from the N-terminus, the 550-residue chain is Chaperonin GroEL (550 aa).

Residues 30-33, Lys51, 87-91, Gly415, 481-483, and Asp497 each bind ATP; these read TLGP, DGTTT, and NAA.

The protein belongs to the chaperonin (HSP60) family. In terms of assembly, forms a cylinder of 14 subunits composed of two heptameric rings stacked back-to-back. Interacts with the co-chaperonin GroES.

It localises to the cytoplasm. The catalysed reaction is ATP + H2O + a folded polypeptide = ADP + phosphate + an unfolded polypeptide.. Its function is as follows. Together with its co-chaperonin GroES, plays an essential role in assisting protein folding. The GroEL-GroES system forms a nano-cage that allows encapsulation of the non-native substrate proteins and provides a physical environment optimized to promote and accelerate protein folding. This is Chaperonin GroEL from Photobacterium profundum (strain SS9).